The sequence spans 103 residues: Large ribosomal subunit protein bL21 (103 aa).

It belongs to the bacterial ribosomal protein bL21 family. As to quaternary structure, part of the 50S ribosomal subunit. Contacts protein L20.

In terms of biological role, this protein binds to 23S rRNA in the presence of protein L20. The protein is Large ribosomal subunit protein bL21 of Desulfotalea psychrophila (strain LSv54 / DSM 12343).